We begin with the raw amino-acid sequence, 378 residues long: Response regulator aspartate phosphatase A (378 aa).

TPR repeat units lie at residues 101–137 (YYFN…VSDD), 148–181 (AEIF…TVRR), 183–215 (QCEF…AKKE), 222–255 (SSAL…CKSE), 261–294 (PHSI…ARQY), and 336–369 (EELA…QKQI).

It belongs to the Rap family. In terms of assembly, homodimer. Interacts with its substrate, phosphorylated Spo0F, and its inhibitor, the PhrA pentapeptide. The RapA dimer forms a stable complex with two molecules of phosphorylated Spo0F. The complex is dissociated after dephosphorylation of Spo0F by RapA. It depends on Mn(2+) as a cofactor.

The protein localises to the cytoplasm. Its activity is regulated as follows. Phosphatase activity is inhibited by the phosphatase regulator PhrA. Interaction with PhrA dissociates the RapA-Spo0F complex. Activity is abolished in the presence of EDTA. Functionally, involved in the regulation of sporulation. Acts as a phosphatase that specifically dephosphorylates the sporulation initiation phosphotransferase Spo0F and inhibits its activity. The protein is Response regulator aspartate phosphatase A of Bacillus subtilis (strain 168).